We begin with the raw amino-acid sequence, 224 residues long: LexA repressor (224 aa).

The H-T-H motif DNA-binding region spans 31-51; it reads RAEIAAELGFKSANAAEEHLQ. Catalysis depends on for autocatalytic cleavage activity residues serine 142 and lysine 179.

This sequence belongs to the peptidase S24 family. In terms of assembly, homodimer.

It catalyses the reaction Hydrolysis of Ala-|-Gly bond in repressor LexA.. Functionally, represses a number of genes involved in the response to DNA damage (SOS response), including recA and lexA. In the presence of single-stranded DNA, RecA interacts with LexA causing an autocatalytic cleavage which disrupts the DNA-binding part of LexA, leading to derepression of the SOS regulon and eventually DNA repair. This is LexA repressor from Acidovorax ebreus (strain TPSY) (Diaphorobacter sp. (strain TPSY)).